Here is a 364-residue protein sequence, read N- to C-terminus: Inner membrane ABC transporter permease protein YejB (364 aa).

Residues 1–8 are Periplasmic-facing; sequence MGAYLIRR. The chain crosses the membrane as a helical span at residues 9-29; it reads LLLVIPTLWAIITINFFIVQI. Over 30–37 the chain is Cytoplasmic; the sequence is APGGPVDQ. The helical transmembrane segment at 38–58 threads the bilayer; the sequence is AIAAIEFGNAGVLPGAGGEGV. Over 59 to 135 the chain is Periplasmic; that stretch reads RASHAQTGVG…LTLIKDSLPV (77 aa). The ABC transmembrane type-1 domain maps to 133 to 348; the sequence is LPVSITLGLW…LIGLLLNIVS (216 aa). A helical membrane pass occupies residues 136-156; the sequence is SITLGLWSTLIIYLVSIPLGI. At 157 to 172 the chain is on the cytoplasmic side; it reads RKAVYNGSRFDVWSSA. The helical transmembrane segment at 173 to 193 threads the bilayer; sequence FIIIGYAIPAFLFAILLIVFF. Residues 194-224 lie on the Periplasmic side of the membrane; it reads AGGSYFDLFPLRGLVSANFDSLPWYQKITDY. The helical transmembrane segment at 225 to 245 threads the bilayer; it reads LWHITLPVLATVIGGFAALTM. At 246 to 284 the chain is on the cytoplasmic side; the sequence is LTKNSFLDEVRKQYVVTARAKGVSEKNILWKHVFRNAML. A helical transmembrane segment spans residues 285-305; it reads LVIAGFPATFISMFFTGSLLI. The Periplasmic portion of the chain corresponds to 306–326; it reads EVMFSLNGLGLLGYEATVSRD. Residues 327 to 347 traverse the membrane as a helical segment; sequence YPVMFGTLYIFTLIGLLLNIV. Residues 348 to 364 are Cytoplasmic-facing; that stretch reads SDISYTLVDPRIDFEGR.

It belongs to the binding-protein-dependent transport system permease family. OppBC subfamily.

It is found in the cell inner membrane. In terms of biological role, probably part of a binding-protein-dependent transport system. Probably responsible for the translocation of the substrate across the membrane. In Escherichia coli O157:H7, this protein is Inner membrane ABC transporter permease protein YejB (yejB).